A 248-amino-acid polypeptide reads, in one-letter code: 2,3-bisphosphoglycerate-dependent phosphoglycerate mutase (248 aa).

Substrate contacts are provided by residues Arg8 to Asn15, Thr21 to Gly22, Arg60, Glu87 to Tyr90, Lys98, Arg114 to Arg115, and Gly183 to Asn184. The active-site Tele-phosphohistidine intermediate is the His9. The active-site Proton donor/acceptor is Glu87.

Belongs to the phosphoglycerate mutase family. BPG-dependent PGAM subfamily. In terms of assembly, homodimer.

It carries out the reaction (2R)-2-phosphoglycerate = (2R)-3-phosphoglycerate. It participates in carbohydrate degradation; glycolysis; pyruvate from D-glyceraldehyde 3-phosphate: step 3/5. In terms of biological role, catalyzes the interconversion of 2-phosphoglycerate and 3-phosphoglycerate. This is 2,3-bisphosphoglycerate-dependent phosphoglycerate mutase from Alteromonas mediterranea (strain DSM 17117 / CIP 110805 / LMG 28347 / Deep ecotype).